The sequence spans 361 residues: Probable dual-specificity RNA methyltransferase RlmN (361 aa).

Glu-91 acts as the Proton acceptor in catalysis. Positions 97 to 329 constitute a Radical SAM core domain; that stretch reads QHYGLSVCVT…KKKGGNCVVR (233 aa). Cys-104 and Cys-340 are disulfide-bonded. [4Fe-4S] cluster contacts are provided by Cys-111, Cys-115, and Cys-118. S-adenosyl-L-methionine contacts are provided by residues 163–164, Ser-195, 218–220, and Asn-296; these read GE and SLH. The S-methylcysteine intermediate role is filled by Cys-340.

This sequence belongs to the radical SAM superfamily. RlmN family. It depends on [4Fe-4S] cluster as a cofactor.

It is found in the cytoplasm. The catalysed reaction is adenosine(2503) in 23S rRNA + 2 reduced [2Fe-2S]-[ferredoxin] + 2 S-adenosyl-L-methionine = 2-methyladenosine(2503) in 23S rRNA + 5'-deoxyadenosine + L-methionine + 2 oxidized [2Fe-2S]-[ferredoxin] + S-adenosyl-L-homocysteine. The enzyme catalyses adenosine(37) in tRNA + 2 reduced [2Fe-2S]-[ferredoxin] + 2 S-adenosyl-L-methionine = 2-methyladenosine(37) in tRNA + 5'-deoxyadenosine + L-methionine + 2 oxidized [2Fe-2S]-[ferredoxin] + S-adenosyl-L-homocysteine. Its function is as follows. Specifically methylates position 2 of adenine 2503 in 23S rRNA and position 2 of adenine 37 in tRNAs. This chain is Probable dual-specificity RNA methyltransferase RlmN, found in Streptococcus pneumoniae (strain P1031).